The following is a 953-amino-acid chain: Lysosomal alpha-glucosidase (953 aa).

Residues 1 to 27 (MNIRKPLCSNSVVGACTLISLTTAVIL) form the signal peptide. Positions 28–69 (GHLMLRELMLLPQDLHESSSGLWKTYRPHHQEGYKPGPLHIQ) are excised as a propeptide. A P-type domain is found at 80–131 (TQCDVPPSSRFDCAPDKGISQEQCEARGCCYVPAGQVLKEPQIGQPWCFFPP). 3 disulfide bridges follow: Cys82/Cys109, Cys92/Cys108, and Cys103/Cys127. Residues Asn140, Asn233, and Asn390 are each glycosylated (N-linked (GlcNAc...) asparagine). Asp404 is a substrate binding site. A glycan (N-linked (GlcNAc...) asparagine) is linked at Asn470. Residue Asp518 is the Nucleophile of the active site. Glu521 is an active-site residue. A disulfide bridge links Cys533 with Cys558. Substrate contacts are provided by Arg600 and Asp616. Cys647 and Cys658 are joined by a disulfide. His674 provides a ligand contact to substrate. Residues Asn883, Asn926, and Asn933 are each glycosylated (N-linked (GlcNAc...) asparagine).

This sequence belongs to the glycosyl hydrolase 31 family.

The protein resides in the lysosome. It is found in the lysosome membrane. It carries out the reaction Hydrolysis of terminal, non-reducing (1-&gt;4)-linked alpha-D-glucose residues with release of alpha-D-glucose.. Essential for the degradation of glycogen in lysosomes. Has highest activity on alpha-1,4-linked glycosidic linkages, but can also hydrolyze alpha-1,6-linked glucans. This chain is Lysosomal alpha-glucosidase (Gaa), found in Mus musculus (Mouse).